Consider the following 806-residue polypeptide: Lon protease (806 aa).

One can recognise a Lon N-terminal domain in the interval 13 to 206; sequence LPMMPIRDVV…RVAEMLDIEI (194 aa). 356–363 lines the ATP pocket; sequence GPPGVGKT. The 182-residue stretch at 599-780 folds into the Lon proteolytic domain; that stretch reads KNEIGAATGL…DEVLKIALER (182 aa). Active-site residues include serine 686 and lysine 729.

It belongs to the peptidase S16 family. As to quaternary structure, homohexamer. Organized in a ring with a central cavity.

The protein localises to the cytoplasm. It catalyses the reaction Hydrolysis of proteins in presence of ATP.. ATP-dependent serine protease that mediates the selective degradation of mutant and abnormal proteins as well as certain short-lived regulatory proteins. Required for cellular homeostasis and for survival from DNA damage and developmental changes induced by stress. Degrades polypeptides processively to yield small peptide fragments that are 5 to 10 amino acids long. Binds to DNA in a double-stranded, site-specific manner. In Solibacter usitatus (strain Ellin6076), this protein is Lon protease.